The following is a 91-amino-acid chain: Probable Fe(2+)-trafficking protein (91 aa).

It belongs to the Fe(2+)-trafficking protein family.

Functionally, could be a mediator in iron transactions between iron acquisition and iron-requiring processes, such as synthesis and/or repair of Fe-S clusters in biosynthetic enzymes. This chain is Probable Fe(2+)-trafficking protein, found in Burkholderia thailandensis (strain ATCC 700388 / DSM 13276 / CCUG 48851 / CIP 106301 / E264).